A 274-amino-acid chain; its full sequence is Tryptophan synthase alpha chain (274 aa).

Catalysis depends on proton acceptor residues Glu49 and Asp60.

The protein belongs to the TrpA family. Tetramer of two alpha and two beta chains.

The enzyme catalyses (1S,2R)-1-C-(indol-3-yl)glycerol 3-phosphate + L-serine = D-glyceraldehyde 3-phosphate + L-tryptophan + H2O. The protein operates within amino-acid biosynthesis; L-tryptophan biosynthesis; L-tryptophan from chorismate: step 5/5. Its function is as follows. The alpha subunit is responsible for the aldol cleavage of indoleglycerol phosphate to indole and glyceraldehyde 3-phosphate. This Gluconacetobacter diazotrophicus (strain ATCC 49037 / DSM 5601 / CCUG 37298 / CIP 103539 / LMG 7603 / PAl5) protein is Tryptophan synthase alpha chain.